Reading from the N-terminus, the 417-residue chain is NADH-quinone oxidoreductase subunit D (417 aa).

The protein belongs to the complex I 49 kDa subunit family. As to quaternary structure, NDH-1 is composed of 14 different subunits. Subunits NuoB, C, D, E, F, and G constitute the peripheral sector of the complex.

It localises to the cell inner membrane. It carries out the reaction a quinone + NADH + 5 H(+)(in) = a quinol + NAD(+) + 4 H(+)(out). Its function is as follows. NDH-1 shuttles electrons from NADH, via FMN and iron-sulfur (Fe-S) centers, to quinones in the respiratory chain. The immediate electron acceptor for the enzyme in this species is believed to be ubiquinone. Couples the redox reaction to proton translocation (for every two electrons transferred, four hydrogen ions are translocated across the cytoplasmic membrane), and thus conserves the redox energy in a proton gradient. In Legionella pneumophila subsp. pneumophila (strain Philadelphia 1 / ATCC 33152 / DSM 7513), this protein is NADH-quinone oxidoreductase subunit D.